Consider the following 460-residue polypeptide: Cysteine--tRNA ligase (460 aa).

Position 28 (Cys-28) interacts with Zn(2+). A 'HIGH' region motif is present at residues 30–40 (NTVYDFCHIGH). Zn(2+) contacts are provided by Cys-209, His-234, and Glu-238. Positions 266 to 270 (KMSKS) match the 'KMSKS' region motif. Lys-269 contacts ATP.

The protein belongs to the class-I aminoacyl-tRNA synthetase family. As to quaternary structure, monomer. Requires Zn(2+) as cofactor.

Its subcellular location is the cytoplasm. It catalyses the reaction tRNA(Cys) + L-cysteine + ATP = L-cysteinyl-tRNA(Cys) + AMP + diphosphate. This Marinomonas sp. (strain MWYL1) protein is Cysteine--tRNA ligase.